A 212-amino-acid chain; its full sequence is Ribonuclease HII (212 aa).

The 203-residue stretch at 4 to 206 (EVQCGIDEAG…YKKIKEDVES (203 aa)) folds into the RNase H type-2 domain. Residues Asp10, Glu11, and Asp103 each contribute to the a divalent metal cation site.

It belongs to the RNase HII family. Mn(2+) serves as cofactor. Requires Mg(2+) as cofactor.

It localises to the cytoplasm. The catalysed reaction is Endonucleolytic cleavage to 5'-phosphomonoester.. Endonuclease that specifically degrades the RNA of RNA-DNA hybrids. This chain is Ribonuclease HII, found in Thermoplasma volcanium (strain ATCC 51530 / DSM 4299 / JCM 9571 / NBRC 15438 / GSS1).